A 443-amino-acid chain; its full sequence is Diels-Alderase poxQ (443 aa).

The N-terminal stretch at 1-23 is a signal peptide; that stretch reads MARIPLEFLSITLPVLLLAYCLA. 3 N-linked (GlcNAc...) asparagine glycosylation sites follow: N78, N97, and N145.

It belongs to the Diels-Alderase family.

It participates in secondary metabolite biosynthesis. In terms of biological role, diels-Alderase; part of the gene cluster that mediates the biosynthesis of oxaleimides, cytotoxic compounds containing an unusual disubstituted succinimide moiety. The first step of the pathway is provided by the HR-PKS poxF that serves in a new mode of collaborative biosynthesis with the PKS-NRPS poxE, by providing the olefin containing amino acid substrate via the synthesis of an ACP-bound dec-4-enoate. The cytochrome P450 monooxygenase poxM-catalyzed oxidation at the alpha-position creates the enzyme-bound 2-hydroxydec-4-enoyl-ACP thioester, which may be prone to spontaneous hydrolysis to yield 2-hydroxydec-4-enoic acid due to increased electrophilicity of the carbonyl. 2-hydroxydec-4-enoic acid can then be further oxidized by poxM to yield the alpha-ketoacid 2-oxodec-4-enoicacid, which is reductively aminated by the aminotransferase poxL to yield (S,E)-2-aminodec-4-enoic acid. The Hybrid PKS-NRPS synthetase poxE then performs condensation between the octaketide product of its PKS modules and the amino group of (S,E)-2-aminodec-4-enoic acid which is activated and incorporated by the adenylation domain. The resulting aminoacyl product can be cyclized by the Diels-Alderase PoxQ and reductively released by the reductive (R) domain of poxE to yield an aldehyde intermediate. The released aldehyde is then substrate for a Knoevenagel condensation by the hydrolyase poxO followed by an oxidation at the 5-position of the pyrrolidone ring. The presence of the olefin from the amino acid building block allows for migration of the substituted allyl group to occur. This allylic transposition reaction takes place in a conjugate addition, semipinacol-like fashion to yield a succinimide intermediate. Iterative two-electron oxidations of the C7 methyl of the succinimide intermediate to the carboxylic acid can be catalyzed by one of two remaining cytochrome P450 monooxygenasess poxC or poxD to yield oxaleimide A. Subsequent oxidation yields the maleimide scaffold oxaleimide I. Both oxaleimide A and oxaleimide I can undergo oxidative modifications in the decalin ring to yield the series of products oxaleimides B to H. The protein is Diels-Alderase poxQ of Penicillium oxalicum.